We begin with the raw amino-acid sequence, 117 residues long: Large ribosomal subunit protein bL20 (117 aa).

The protein belongs to the bacterial ribosomal protein bL20 family.

Functionally, binds directly to 23S ribosomal RNA and is necessary for the in vitro assembly process of the 50S ribosomal subunit. It is not involved in the protein synthesizing functions of that subunit. The polypeptide is Large ribosomal subunit protein bL20 (Nitratidesulfovibrio vulgaris (strain DP4) (Desulfovibrio vulgaris)).